A 181-amino-acid polypeptide reads, in one-letter code: Transcriptional repressor NrdR (181 aa).

The segment at 3–34 is a zinc-finger region; the sequence is CPYCQHTDSRVLESRSTGAGRSIRRRRECLSC. One can recognise an ATP-cone domain in the interval 49–139; that stretch reads ISVIKRNGQS…VYRQFQGVDD (91 aa).

This sequence belongs to the NrdR family. The cofactor is Zn(2+).

In terms of biological role, negatively regulates transcription of bacterial ribonucleotide reductase nrd genes and operons by binding to NrdR-boxes. This Picosynechococcus sp. (strain ATCC 27264 / PCC 7002 / PR-6) (Agmenellum quadruplicatum) protein is Transcriptional repressor NrdR.